A 419-amino-acid chain; its full sequence is GTPase Obg (419 aa).

Positions 1–156 (MRFVDYVSIE…FYLDLQLKVM (156 aa)) constitute an Obg domain. Residues 157-334 (ADIGLVGKPN…LEEKQKKLEI (178 aa)) form the OBG-type G domain. GTP is bound by residues 163–170 (GKPNAGKS), 188–192 (FTTLV), 209–212 (DLPG), 278–281 (NKCD), and 315–317 (NII). Positions 170 and 190 each coordinate Mg(2+). One can recognise an OCT domain in the interval 342–419 (IEFNLKAPFL…RIYEFEFHWN (78 aa)).

This sequence belongs to the TRAFAC class OBG-HflX-like GTPase superfamily. OBG GTPase family. Monomer. Mg(2+) is required as a cofactor.

It is found in the cytoplasm. An essential GTPase which binds GTP, GDP and possibly (p)ppGpp with moderate affinity, with high nucleotide exchange rates and a fairly low GTP hydrolysis rate. Plays a role in control of the cell cycle, stress response, ribosome biogenesis and in those bacteria that undergo differentiation, in morphogenesis control. The protein is GTPase Obg of Mesomycoplasma hyopneumoniae (strain 232) (Mycoplasma hyopneumoniae).